A 404-amino-acid chain; its full sequence is Ubiquitin-like modifier-activating enzyme 5 (404 aa).

ATP is bound by residues G83, D104, K127, N150, and N184. Residues C226 and C229 each contribute to the Zn(2+) site. The active-site Glycyl thioester intermediate is C250. Zn(2+)-binding residues include C303 and C308. Residues 372–404 (APEKSSETSEETVSAATADETSLEDLMAQMKSM) are disordered. Residues 382–391 (ETVSAATADE) are compositionally biased toward low complexity.

The protein belongs to the ubiquitin-activating E1 family. UBA5 subfamily. As to quaternary structure, interacts (via C-terminus) with Ufc1. Interacts with Ufm1.

The protein localises to the cytoplasm. The protein resides in the nucleus. It is found in the golgi apparatus. Its function is as follows. E1-like enzyme which activates UFM1. This is Ubiquitin-like modifier-activating enzyme 5 from Drosophila melanogaster (Fruit fly).